A 256-amino-acid chain; its full sequence is Ras-related protein Rab-26 (256 aa).

Residues 1 to 51 form a disordered region; that stretch reads MSRKKTPKSKGASTPAASTLPTANGARPARSGTALSGPDAPPNGPLQPGRP. Residues 12-23 show a composition bias toward low complexity; the sequence is ASTPAASTLPTA. GTP-binding residues include serine 72, glycine 73, valine 74, glycine 75, lysine 76, threonine 77, cysteine 78, serine 95, and threonine 96. Position 77 (threonine 77) interacts with Mg(2+). 2 short sequence motifs (switch) span residues 86 to 101 and 119 to 136; these read GAFLAGTFISTVGIDF and DTAGQERFRSVTHAYYRD. Mg(2+)-binding residues include threonine 96 and aspartate 119. Residues glycine 122, asparagine 177, lysine 178, aspartate 180, alanine 208, and lysine 209 each coordinate GTP. 2 S-geranylgeranyl cysteine lipidation sites follow: cysteine 253 and cysteine 254.

Belongs to the small GTPase superfamily. Rab family. In terms of assembly, interacts with RIMS1. Interacts with ADRA2B. It depends on Mg(2+) as a cofactor. In terms of tissue distribution, predominantly expressed in brain.

It localises to the golgi apparatus membrane. It is found in the cytoplasmic vesicle. The protein localises to the secretory vesicle membrane. The enzyme catalyses GTP + H2O = GDP + phosphate + H(+). Regulated by guanine nucleotide exchange factors (GEFs) which promote the exchange of bound GDP for free GTP. Regulated by GTPase activating proteins (GAPs) which increase the GTP hydrolysis activity. Inhibited by GDP dissociation inhibitors (GDIs). The small GTPases Rab are key regulators of intracellular membrane trafficking, from the formation of transport vesicles to their fusion with membranes. Rabs cycle between an inactive GDP-bound form and an active GTP-bound form that is able to recruit to membranes different set of downstream effectors directly responsible for vesicle formation, movement, tethering and fusion. RAB26 mediates transport of ADRA2A and ADRA2B from the Golgi to the cell membrane. Plays a role in the maturation of zymogenic granules and in pepsinogen secretion in the stomach. Plays a role in the secretion of amylase from acinar granules in the parotid gland. The protein is Ras-related protein Rab-26 of Homo sapiens (Human).